A 381-amino-acid polypeptide reads, in one-letter code: 4-hydroxy-3-methylbut-2-en-1-yl diphosphate synthase (flavodoxin) (381 aa).

C280, C283, C315, and E322 together coordinate [4Fe-4S] cluster.

This sequence belongs to the IspG family. [4Fe-4S] cluster is required as a cofactor.

The catalysed reaction is (2E)-4-hydroxy-3-methylbut-2-enyl diphosphate + oxidized [flavodoxin] + H2O + 2 H(+) = 2-C-methyl-D-erythritol 2,4-cyclic diphosphate + reduced [flavodoxin]. The protein operates within isoprenoid biosynthesis; isopentenyl diphosphate biosynthesis via DXP pathway; isopentenyl diphosphate from 1-deoxy-D-xylulose 5-phosphate: step 5/6. Its function is as follows. Converts 2C-methyl-D-erythritol 2,4-cyclodiphosphate (ME-2,4cPP) into 1-hydroxy-2-methyl-2-(E)-butenyl 4-diphosphate. In Clavibacter sepedonicus (Clavibacter michiganensis subsp. sepedonicus), this protein is 4-hydroxy-3-methylbut-2-en-1-yl diphosphate synthase (flavodoxin).